Reading from the N-terminus, the 246-residue chain is MTDIPADDPKIELRSDITVELVKSAATDSDVLFAARVSTAGEQSLDELKKDPERSKGLINYLMRDRHGSPFEHNSMTFFVSAPIFVFREFMRHRVGWSYNEESGRYRELQPVFYAPDASRKLVQQGRPGKYVFVEGTPEQHELVGSAMEDSYRQAYATYQQMLAAGVAREVARAVLPVGLYSSMYATCNARSLMHFLGLRTQHELAKVPSFPQREIEMAGEKMEAEWARLMPLTHAAFNANGRVAP.

In terms of domain architecture, ThyX spans 17–241 (ITVELVKSAA…PLTHAAFNAN (225 aa)). Residues Ser69, 92 to 94 (RHR), and Glu101 contribute to the FAD site. DUMP-binding positions include 89–92 (EFMR), 101–105 (EESGR), and Arg173. The short motif at 92–103 (RHRVGWSYNEES) is the ThyX motif element. Residues 189 to 191 (NAR) and His195 contribute to the FAD site. Arg200 contacts dUMP. Arg200 (involved in ionization of N3 of dUMP, leading to its activation) is an active-site residue.

This sequence belongs to the thymidylate synthase ThyX family. In terms of assembly, homotetramer. FAD serves as cofactor.

It catalyses the reaction dUMP + (6R)-5,10-methylene-5,6,7,8-tetrahydrofolate + NADPH + H(+) = dTMP + (6S)-5,6,7,8-tetrahydrofolate + NADP(+). Its pathway is pyrimidine metabolism; dTTP biosynthesis. Functionally, catalyzes the reductive methylation of 2'-deoxyuridine-5'-monophosphate (dUMP) to 2'-deoxythymidine-5'-monophosphate (dTMP) while utilizing 5,10-methylenetetrahydrofolate (mTHF) as the methyl donor, and NADPH and FADH(2) as the reductant. This is Flavin-dependent thymidylate synthase from Streptomyces coelicolor (strain ATCC BAA-471 / A3(2) / M145).